We begin with the raw amino-acid sequence, 217 residues long: Outer-membrane lipoprotein LolB (217 aa).

A signal peptide spans 1 to 20; that stretch reads MSRAVRTLALGGLVLVGLSA. A lipid anchor (N-palmitoyl cysteine) is attached at cysteine 21. Residue cysteine 21 is the site of S-diacylglycerol cysteine attachment.

This sequence belongs to the LolB family. As to quaternary structure, monomer.

The protein localises to the cell outer membrane. Plays a critical role in the incorporation of lipoproteins in the outer membrane after they are released by the LolA protein. This Xanthomonas euvesicatoria pv. vesicatoria (strain 85-10) (Xanthomonas campestris pv. vesicatoria) protein is Outer-membrane lipoprotein LolB.